We begin with the raw amino-acid sequence, 513 residues long: ATP synthase subunit alpha (513 aa).

Gly-169 to Thr-176 provides a ligand contact to ATP.

The protein belongs to the ATPase alpha/beta chains family. F-type ATPases have 2 components, CF(1) - the catalytic core - and CF(0) - the membrane proton channel. CF(1) has five subunits: alpha(3), beta(3), gamma(1), delta(1), epsilon(1). CF(0) has three main subunits: a(1), b(2) and c(9-12). The alpha and beta chains form an alternating ring which encloses part of the gamma chain. CF(1) is attached to CF(0) by a central stalk formed by the gamma and epsilon chains, while a peripheral stalk is formed by the delta and b chains.

Its subcellular location is the cell inner membrane. The catalysed reaction is ATP + H2O + 4 H(+)(in) = ADP + phosphate + 5 H(+)(out). In terms of biological role, produces ATP from ADP in the presence of a proton gradient across the membrane. The alpha chain is a regulatory subunit. This chain is ATP synthase subunit alpha, found in Shewanella amazonensis (strain ATCC BAA-1098 / SB2B).